Here is a 965-residue protein sequence, read N- to C-terminus: Receptor-like protein 15 (965 aa).

The signal sequence occupies residues 1–23 (MEGKVFLGHNLIWVMLLMGQLHG). Topologically, residues 24-916 (YKSCIDEEKI…GVEADESIID (893 aa)) are extracellular. N-linked (GlcNAc...) asparagine glycosylation is found at asparagine 57, asparagine 95, asparagine 109, and asparagine 145. LRR repeat units lie at residues 80 to 102 (EISF…LHPF), 103 to 127 (EDVR…GYKS), 131 to 154 (LRKL…FLSA), 156 to 179 (TSLT…ELRD), 180 to 204 (LTNL…ELSS), 206 to 230 (RKLK…KFCT), 243 to 267 (LNNM…LTSL), 268 to 290 (TGLR…SLGS), 292 to 315 (QSLE…SLAN), 316 to 341 (LSNL…SWKP), 342 to 365 (KFQL…LLHQ), 366 to 389 (KDLR…LLAN), 391 to 415 (TKLK…AHNL), 417 to 435 (FLDV…NIGW), 437 to 461 (FPHL…LGNM), 462 to 485 (NGIQ…FVNG), and 487 to 512 (YSMA…NFTN). An N-linked (GlcNAc...) asparagine glycan is attached at asparagine 194. An N-linked (GlcNAc...) asparagine glycan is attached at asparagine 315. N-linked (GlcNAc...) asparagine glycans are attached at residues asparagine 377 and asparagine 389. N-linked (GlcNAc...) asparagine glycosylation is present at asparagine 444. N-linked (GlcNAc...) asparagine glycosylation is present at asparagine 509. One copy of the LRR 18; degenerate repeat lies at 514–533 (LGLFMDNNLFTGKIGQGLRS). LRR repeat units follow at residues 534–557 (LINL…WIGE), 558–582 (LPSL…LFNK), 584–606 (SLQL…HDSR), 608–627 (GVVL…DTLL), 628–652 (ANVE…NIQN), 654–674 (SILL…LCGL), 675–698 (SNIQ…LSNT), 778–801 (LKLL…EFGG), 802–825 (LLEL…SISS), 827–850 (EKME…LTEL), and 851–875 (TSLS…QFNT). N-linked (GlcNAc...) asparagine glycosylation is found at asparagine 546 and asparagine 581. Residues asparagine 652, asparagine 662, asparagine 688, and asparagine 697 are each glycosylated (N-linked (GlcNAc...) asparagine). Residues asparagine 809 and asparagine 814 are each glycosylated (N-linked (GlcNAc...) asparagine). Asparagine 862, asparagine 893, and asparagine 898 each carry an N-linked (GlcNAc...) asparagine glycan. The helical transmembrane segment at 917 to 937 (MVSFYLSFAAAYVTILIGILA) threads the bilayer. At 938 to 965 (SLSFDSPWSRFWFYKVDAFIKKVRNLLL) the chain is on the cytoplasmic side.

This sequence belongs to the RLP family.

The protein localises to the cell membrane. In Arabidopsis thaliana (Mouse-ear cress), this protein is Receptor-like protein 15.